Consider the following 359-residue polypeptide: Type-1 angiotensin II receptor (359 aa).

Residues 1–25 (MILNSSTEDGIKRIQDDCPKAGRHN) lie on the Extracellular side of the membrane. N-linked (GlcNAc...) (complex) asparagine glycosylation occurs at Asn-4. Positions 15 and 17 each coordinate angiotensin II. Cystine bridges form between Cys-18-Cys-274 and Cys-101-Cys-180. A helical transmembrane segment spans residues 26 to 55 (YIFVMIPTLYSIIFVVGIFGNSLVVIVIYF). At 56-61 (YMKLKT) the chain is on the cytoplasmic side. A helical membrane pass occupies residues 62 to 89 (VASVFLLNLALADLCFLLTLPLWAVYTA). Topologically, residues 90–98 (MEYRWPFGN) are extracellular. Residues 99-125 (YLCKIASASVSFNLYASVFLLTCLSID) traverse the membrane as a helical segment. Topologically, residues 126–141 (RYLAIVHPMKSRLRRT) are cytoplasmic. The chain crosses the membrane as a helical span at residues 142–165 (MLVAKVTCIIIWLLAGLASLPAII). Residues 166 to 190 (HRNVFFIENTNITVCAFHYESQNST) lie on the Extracellular side of the membrane. Arg-167 contributes to the angiotensin II binding site. Residue Asn-176 is glycosylated (N-linked (GlcNAc...) asparagine). Phe-182, His-183, and Tyr-184 together coordinate angiotensin II. A glycan (N-linked (GlcNAc...) asparagine) is linked at Asn-188. A helical membrane pass occupies residues 191-216 (LPIGLGLTKNILGFLFPFLIILTSYT). Residue Lys-199 participates in angiotensin II binding. At 217 to 239 (LIWKALKKAYEIQKNKPRNDDIF) the chain is on the cytoplasmic side. Residues 240–268 (KIIMAIVLFFFFSWIPHQIFTFLDVLIQL) form a helical membrane-spanning segment. Topologically, residues 269–278 (GIIRDCRIAD) are extracellular. Residues 279–304 (IVDTAMPITICIAYFNNCLNPLFYGF) traverse the membrane as a helical segment. Residues 305–359 (LGKKFKRYFLQLLKYIPPKAKSHSNLSTKMSTLSYRPSDNVSSSTKKPAPCFEVE) are Cytoplasmic-facing. Residues 335 to 350 (STLSYRPSDNVSSSTK) show a composition bias toward polar residues. The interval 335–359 (STLSYRPSDNVSSSTKKPAPCFEVE) is disordered. Residue Cys-355 is the site of S-palmitoyl cysteine attachment.

The protein belongs to the G-protein coupled receptor 1 family. In terms of assembly, interacts with MAS1. Interacts with ARRB1. Interacts with FLNA (via filamin repeat 21); increases PKA-mediated phosphorylation of FLNA. C-terminal Ser or Thr residues may be phosphorylated. As to expression, liver, lung, adrenal and adrenocortical adenomas.

The protein localises to the cell membrane. Its activity is regulated as follows. Strongly inhibited by anti-hypertensive drugs losartan, candesartan, valsartan, irbesartan, telmisartan, eprosartan, olmesartan and azilsartan, most of which share a common biphenyl-tetrazole scaffold. Receptor for angiotensin II, a vasoconstricting peptide, which acts as a key regulator of blood pressure and sodium retention by the kidney. The activated receptor in turn couples to G-alpha proteins G(q) (GNAQ, GNA11, GNA14 or GNA15) and thus activates phospholipase C and increases the cytosolic Ca(2+) concentrations, which in turn triggers cellular responses such as stimulation of protein kinase C. Functionally, (Microbial infection) During SARS coronavirus-2/SARS-CoV-2 infection, it is able to recognize and internalize the complex formed by secreted ACE2 and SARS-CoV-2 spike protein through DNM2/dynamin 2-dependent endocytosis. The polypeptide is Type-1 angiotensin II receptor (Homo sapiens (Human)).